A 161-amino-acid polypeptide reads, in one-letter code: Nucleotide-binding protein PputGB1_4497 (161 aa).

The protein belongs to the YajQ family.

In terms of biological role, nucleotide-binding protein. The chain is Nucleotide-binding protein PputGB1_4497 from Pseudomonas putida (strain GB-1).